The chain runs to 369 residues: ATP-dependent 6-phosphofructokinase (369 aa).

ATP contacts are provided by residues glycine 15, 81 to 82 (KG), and 108 to 111 (GDGS). Mg(2+) is bound at residue aspartate 109. Residues 132-134 (TID), arginine 169, 176-178 (MGR), glutamate 230, arginine 266, and 272-275 (HIQR) each bind substrate. The active-site Proton acceptor is the aspartate 134.

This sequence belongs to the phosphofructokinase type A (PFKA) family. Mixed-substrate PFK group III subfamily. In terms of assembly, homodimer or homotetramer. It depends on Mg(2+) as a cofactor.

It localises to the cytoplasm. It carries out the reaction beta-D-fructose 6-phosphate + ATP = beta-D-fructose 1,6-bisphosphate + ADP + H(+). The protein operates within carbohydrate degradation; glycolysis; D-glyceraldehyde 3-phosphate and glycerone phosphate from D-glucose: step 3/4. Functionally, catalyzes the phosphorylation of D-fructose 6-phosphate to fructose 1,6-bisphosphate by ATP, the first committing step of glycolysis. The protein is ATP-dependent 6-phosphofructokinase of Thermosynechococcus vestitus (strain NIES-2133 / IAM M-273 / BP-1).